Here is a 398-residue protein sequence, read N- to C-terminus: MGFIKTLSLSLAAASAANAAKILSPSRPDDVIPNQYIVVMKDGVSGEAFGSHRAWVSDMHHTNLTRRALLNHGIKKTYDFMRMKGYSGVFDRDTIKDISQSPDVAFIEHDHVVRLTELVEQPDAPTWGLGRVSHQEPGNMDYVYDDTAGDGVWAYDIDTGVDIEHPDFEGRAVWGSNHVDDDDTDGNGHGTHVGGTIGSLTYGVAKKVRIIAVKVLDARGSGSNSGVIAGIDWSVNHAMENNVAERAVINLSLGGARSDTTNMAVANAVQAGLHVAVAAGNDNEDAENSSPASEPTVCTVAASNINDQKASFSNFGSVVDIYAPGEEILSLAPGGGTQTLSGTSMAAPHIAGMGAYLIALENITASAACDRIKELGLEVINNPGAGTTNKLTYNGNGQ.

Residues 1–19 (MGFIKTLSLSLAAASAANA) form the signal peptide. A propeptide spanning residues 20 to 116 (AKILSPSRPD…IEHDHVVRLT (97 aa)) is cleaved from the precursor. The Inhibitor I9 domain occupies 35–115 (QYIVVMKDGV…FIEHDHVVRL (81 aa)). A Peptidase S8 domain is found at 126-398 (TWGLGRVSHQ…NKLTYNGNGQ (273 aa)). Active-site charge relay system residues include aspartate 158 and histidine 189. Residue asparagine 250 is glycosylated (N-linked (GlcNAc...) asparagine). Serine 344 serves as the catalytic Charge relay system. N-linked (GlcNAc...) asparagine glycosylation occurs at asparagine 362.

It belongs to the peptidase S8 family.

It is found in the secreted. Its function is as follows. Secreted subtilisin-like serine protease with keratinolytic activity that contributes to pathogenicity. The sequence is that of Subtilisin-like protease CPC735_015300 from Coccidioides posadasii (strain C735) (Valley fever fungus).